Reading from the N-terminus, the 367-residue chain is NADH-quinone oxidoreductase subunit H (367 aa).

Transmembrane regions (helical) follow at residues 18–38 (VLLFLKIIIVIISVMVSVAYL), 87–107 (LCFLIAPVITFTLALLGWAVI), 132–152 (IGVLYILAISSLGVYGIIIAG), 180–200 (LTIVTVLLATGSLKLGEIVIA), 204–224 (MPYWIDLLLLPMAFMFFISAL), 257–277 (FFLGEYANMILMSAMAVIFFF), 291–311 (IIPGTIWFIFKIVILLFCFIW), and 328–348 (GWKVFLPISLFWVILVSGILV).

The protein belongs to the complex I subunit 1 family. NDH-1 is composed of 14 different subunits. Subunits NuoA, H, J, K, L, M, N constitute the membrane sector of the complex.

Its subcellular location is the cell inner membrane. The enzyme catalyses a quinone + NADH + 5 H(+)(in) = a quinol + NAD(+) + 4 H(+)(out). NDH-1 shuttles electrons from NADH, via FMN and iron-sulfur (Fe-S) centers, to quinones in the respiratory chain. The immediate electron acceptor for the enzyme in this species is believed to be ubiquinone. Couples the redox reaction to proton translocation (for every two electrons transferred, four hydrogen ions are translocated across the cytoplasmic membrane), and thus conserves the redox energy in a proton gradient. This subunit may bind ubiquinone. This chain is NADH-quinone oxidoreductase subunit H, found in Ehrlichia ruminantium (strain Gardel).